Consider the following 271-residue polypeptide: Cobalt import ATP-binding protein CbiO (271 aa).

In terms of domain architecture, ABC transporter spans 2-236 (LATSDLWFRY…TEAMEHAGLT (235 aa)). An ATP-binding site is contributed by 34-41 (GANGCGKS).

Belongs to the ABC transporter superfamily. Cobalt importer (TC 3.A.1.18.1) family. In terms of assembly, forms an energy-coupling factor (ECF) transporter complex composed of an ATP-binding protein (A component, CbiO), a transmembrane protein (T component, CbiQ) and 2 possible substrate-capture proteins (S components, CbiM and CbiN) of unknown stoichimetry. Expression of just CbiMN in E.coli confers some cobalt uptake.

Its subcellular location is the cell inner membrane. It functions in the pathway cofactor biosynthesis; adenosylcobalamin biosynthesis. Part of the energy-coupling factor (ECF) transporter complex CbiMNOQ involved in cobalt import. The complex confers cobalt uptake upon expression in E.coli; can also transport nickel with a very low affinity. Presumably responsible for energy coupling to the transport system. This is Cobalt import ATP-binding protein CbiO from Salmonella typhimurium (strain LT2 / SGSC1412 / ATCC 700720).